Reading from the N-terminus, the 89-residue chain is Late cornified envelope protein 3A (89 aa).

2 stretches are compositionally biased toward low complexity: residues 1–10 (MSCQQNQQQC) and 17–46 (PAKSPAQCLPPASSSCAPSSGGCGPSSERS). Disordered regions lie at residues 1–46 (MSCQ…SERS) and 62–89 (CQSSNSCDRGSGQQGGSSSCGHSSAGCC).

Belongs to the LCE family. As to quaternary structure, interacts with CYSRT1; the interaction is direct. In terms of tissue distribution, skin-specific. Expression was readily detected in adult trunk skin, adult arm skin, fetal skin, penal skin, vulva, esophagus and tongue. Not expressed in the cervix, rectum, lung, colon, or placenta.

In terms of biological role, a structural component of the cornified envelope of the stratum corneum involved in innate cutaneous host defense. Possesses defensin-like antimicrobial activity against a broad spectrum of Gram-positive and Gram-negative bacteria, both aerobic and anaerobic species. Upon inflammation, may regulate skin barrier repair by shaping cutaneous microbiota composition and immune response to bacterial antigens. The sequence is that of Late cornified envelope protein 3A from Homo sapiens (Human).